A 232-amino-acid polypeptide reads, in one-letter code: 5'-methylthioadenosine/S-adenosylhomocysteine nucleosidase (232 aa).

The active-site Proton acceptor is Glu12. Residues Gly78, Ile152, and 173 to 174 (ME) contribute to the substrate site. Asp197 acts as the Proton donor in catalysis.

It belongs to the PNP/UDP phosphorylase family. MtnN subfamily. In terms of assembly, homodimer.

The catalysed reaction is S-adenosyl-L-homocysteine + H2O = S-(5-deoxy-D-ribos-5-yl)-L-homocysteine + adenine. It carries out the reaction S-methyl-5'-thioadenosine + H2O = 5-(methylsulfanyl)-D-ribose + adenine. The enzyme catalyses 5'-deoxyadenosine + H2O = 5-deoxy-D-ribose + adenine. It participates in amino-acid biosynthesis; L-methionine biosynthesis via salvage pathway; S-methyl-5-thio-alpha-D-ribose 1-phosphate from S-methyl-5'-thioadenosine (hydrolase route): step 1/2. Functionally, catalyzes the irreversible cleavage of the glycosidic bond in both 5'-methylthioadenosine (MTA) and S-adenosylhomocysteine (SAH/AdoHcy) to adenine and the corresponding thioribose, 5'-methylthioribose and S-ribosylhomocysteine, respectively. Also cleaves 5'-deoxyadenosine, a toxic by-product of radical S-adenosylmethionine (SAM) enzymes, into 5-deoxyribose and adenine. Thus, is required for in vivo function of the radical SAM enzymes biotin synthase and lipoic acid synthase, that are inhibited by 5'-deoxyadenosine accumulation. The sequence is that of 5'-methylthioadenosine/S-adenosylhomocysteine nucleosidase from Salmonella arizonae (strain ATCC BAA-731 / CDC346-86 / RSK2980).